The chain runs to 164 residues: Large ribosomal subunit protein uL23 (164 aa).

The interval 1–41 (MPAKAASAAASKKNSAPKSAVSKKVAKKGAPAAAAKPTKVV) is disordered.

The protein belongs to the universal ribosomal protein uL23 family.

Its function is as follows. This protein binds to a specific region on the 26S rRNA. The protein is Large ribosomal subunit protein uL23 (RPL23A) of Trypanosoma brucei brucei.